Here is a 161-residue protein sequence, read N- to C-terminus: Stress response protein YvgO (161 aa).

A signal peptide spans 1-26; sequence MKRIRIPMTLALGAALTIAPLSFASA.

The protein is Stress response protein YvgO (yvgO) of Bacillus subtilis (strain 168).